Reading from the N-terminus, the 1273-residue chain is Ribulose bisphosphate carboxylase small subunit, chloroplastic (1273 aa).

The transit peptide at 1–134 (MPFDRQPLLS…AVLPFTSEKD (134 aa)) directs the protein to the chloroplast. Propeptides lie at residues 269 to 278 (GMAAMTGEKD), 412 to 421 (GMAAMTGEKD), 556 to 565 (GMAAMTGEKD), 699 to 708 (GMAAMTGEKD), 844 to 853 (GMAAMTGEKE), 987 to 996 (GMAAMTGEKD), and 1131 to 1140 (GMAAMTGEKE).

Belongs to the RuBisCO small chain family. As to quaternary structure, heterohexadecamer of 8 large and 8 small subunits. Eight small subunits are processed from a large polyprotein. All start with the same sequence but there is more heterogeneity at the C-terminus.

Its subcellular location is the plastid. The protein resides in the chloroplast. Functionally, ruBisCO catalyzes two reactions: the carboxylation of D-ribulose 1,5-bisphosphate, the primary event in carbon dioxide fixation, as well as the oxidative fragmentation of the pentose substrate. Both reactions occur simultaneously and in competition at the same active site. Although the small subunit is not catalytic it is essential for maximal activity. This Euglena gracilis protein is Ribulose bisphosphate carboxylase small subunit, chloroplastic.